Consider the following 468-residue polypeptide: 6-phospho-beta-galactosidase (468 aa).

Q19, H116, N159, E160, and N297 together coordinate D-galactose 6-phosphate. E160 (proton donor) is an active-site residue. E375 (nucleophile) is an active-site residue. D-galactose 6-phosphate is bound by residues S428, W429, K435, and Y437.

The protein belongs to the glycosyl hydrolase 1 family.

It carries out the reaction a 6-phospho-beta-D-galactoside + H2O = D-galactose 6-phosphate + an alcohol. It functions in the pathway carbohydrate metabolism; lactose degradation; D-galactose 6-phosphate and beta-D-glucose from lactose 6-phosphate: step 1/1. The protein is 6-phospho-beta-galactosidase of Streptococcus sanguinis (strain SK36).